Consider the following 434-residue polypeptide: Nuclear receptor subfamily 1 group I member 2 (434 aa).

The nuclear receptor DNA-binding region spans 38–107 (PQICRVCGDK…RLRKCLESGM (70 aa)). NR C4-type zinc fingers lie at residues 41 to 61 (CRVCGDKATGYHFNVMTCEGC) and 77 to 102 (CPFRKGACEITRKTRRQCQACRLRKC). Positions 66–92 (RRAMKRNARLRCPFRKGACEITRKTRR) match the Bipartite nuclear localization signal motif. A hinge region spans residues 108–145 (KKEMIMSDAAVEERRALIKRKKRERIGTQPPGVQGLTE). In terms of domain architecture, NR LBD spans 146-433 (EQRMMIRELM…LMQELFGITG (288 aa)). Hyperforin-binding positions include S247, 285 to 288 (QLRF), and H407.

The protein belongs to the nuclear hormone receptor family. NR1 subfamily. In terms of assembly, heterodimer with RXRA. Interacts with NCOA1. Interacts (via domain NR LBD) with CRY1 and CRY2 in a ligand-dependent manner.

Its subcellular location is the nucleus. In terms of biological role, nuclear receptor that binds and is activated by a variety of endogenous and xenobiotic compounds. Transcription factor that activates the transcription of multiple genes involved in the metabolism and secretion of potentially harmful xenobiotics, endogenous compounds and drugs. Response to specific ligands is species-specific, due to differences in the ligand-binding domain. Activated by naturally occurring steroids, such as pregnenolone and progesterone. Binds to a response element in the promoters of the CYP3A4 and ABCB1/MDR1 genes. The protein is Nuclear receptor subfamily 1 group I member 2 (NR1I2) of Macaca mulatta (Rhesus macaque).